A 404-amino-acid polypeptide reads, in one-letter code: Transcription factor sem-2 (404 aa).

The HMG box DNA-binding region spans 93–161 (IKRPMNAFMV…CHMQEYPDYK (69 aa)). Disordered regions lie at residues 158–218 (PDYK…QFQN) and 321–359 (HTSPPSVDQDDMRSLSSGSSGYADCSASEQSTSSPNSAG). Positions 177–199 (QQPAQPQAPQQQQAPPRGASPQA) are enriched in low complexity. Composition is skewed to polar residues over residues 207 to 218 (TDQQSETQQFQN) and 347 to 359 (ASEQSTSSPNSAG).

The protein localises to the nucleus. Probable transcription factor required for embryogenesis, vulval development and cell fate specification of the postembryonic mesoderm (also known as the M lineage). Specifically, required for the specification of sex myoblast cells and their development into the muscles that are necessary for egg-laying. In addition, may be involved in RME GABAergic motor neuron progenitor cell fate specification. The chain is Transcription factor sem-2 from Caenorhabditis elegans.